The following is a 502-amino-acid chain: Protein adenylyltransferase Fic (502 aa).

Residues 1-24 (MAMATGKATEEEQPEQGQQQQQLQ) are disordered. Over residues 15 to 24 (EQGQQQQQLQ) the composition is skewed to low complexity. A helical membrane pass occupies residues 38–60 (FALFFIAGCLAAFGFHALTSSSG). 2 TPR repeats span residues 122-155 (AMGA…APKH) and 156-190 (PEVL…NPSN). The Inhibitory (S/T)XXXE(G/N) motif signature appears at 247-252 (SVGIEG). Residues Glu251 and 332–335 (VGGH) each bind ATP. The region spanning 301–436 (ITLKDILELH…IRPFVRFIAD (136 aa)) is the Fido domain. The active site involves His379. ATP contacts are provided by residues 383 to 390 (DGNGRTSR), 415 to 416 (YY), and Asn423. Positions 478-502 (SPELYESGSGSGAGAGAGSGQKGMP) are disordered. The segment covering 486 to 502 (SGSGAGAGAGSGQKGMP) has biased composition (gly residues).

This sequence belongs to the fic family. Homodimer.

The protein localises to the membrane. It catalyses the reaction L-tyrosyl-[protein] + ATP = O-(5'-adenylyl)-L-tyrosyl-[protein] + diphosphate. It carries out the reaction L-threonyl-[protein] + ATP = 3-O-(5'-adenylyl)-L-threonyl-[protein] + diphosphate. The enzyme catalyses 3-O-(5'-adenylyl)-L-threonyl-[protein] + H2O = L-threonyl-[protein] + AMP + H(+). The side chain of Glu-251 determines which of the two opposing activities (AMPylase or de-AMPylase) will take place. In response to endoplasmic reticulum stress, mediates de-AMPylase activity. Adenylyltransferase activity is inhibited by the inhibitory helix present at the N-terminus: Glu-251 binds ATP and competes with ATP-binding at Arg-390, thereby preventing adenylyltransferase activity. In unstressed cells, disengagement of Glu-251 promotes adenylyltransferase activity. Activation dissociates ATP-binding from Glu-251, allowing ordered binding of the entire ATP moiety with the alpha-phosphate in an orientation that is productive for accepting an incoming target hydroxyl side chain. Its function is as follows. Protein that can both mediate the addition of adenosine 5'-monophosphate (AMP) to specific residues of target proteins (AMPylation), and the removal of the same modification from target proteins (de-AMPylation), depending on the context. The side chain of Glu-251 determines which of the two opposing activities (AMPylase or de-AMPylase) will take place. Acts as a key regulator of the unfolded protein response (UPR) by mediating AMPylation or de-AMPylation of Hsc70-3/BiP. In unstressed cells, acts as an adenylyltransferase by mediating AMPylation of Hsc70-3/BiP at 'Thr-518', thereby inactivating it. In response to endoplasmic reticulum stress, acts as a phosphodiesterase by mediating removal of ATP (de-AMPylation) from Hsc70-3/BiP at 'Thr-518', leading to restore HSPA5/BiP activity. This chain is Protein adenylyltransferase Fic, found in Drosophila mojavensis (Fruit fly).